A 191-amino-acid polypeptide reads, in one-letter code: Protein adenylyltransferase NmFic (191 aa).

The region spanning 37–162 is the Fido domain; that stretch reads GTTAGLQQIH…NDLELRFLLK (126 aa). ATP-binding positions include Lys67, 104–107, 112–118, and 140–143; these read NIAH, GNGRSTR, and KTLY. The short motif at 182–187 is the Inhibitory (S/T)XXXE(G/N) motif element; sequence SYYYEG. Tyr183 is subject to O-AMP-tyrosine; in vitro. Glu186 lines the ATP pocket.

As to quaternary structure, homodimer. Post-translationally, auto-AMPylation at Tyr-183 in vitro.

The enzyme catalyses L-tyrosyl-[protein] + ATP = O-(5'-adenylyl)-L-tyrosyl-[protein] + diphosphate. It catalyses the reaction L-threonyl-[protein] + ATP = 3-O-(5'-adenylyl)-L-threonyl-[protein] + diphosphate. Its activity is regulated as follows. Adenylyltransferase activity is inhibited by the inhibitory helix present at the C-terminus: Glu-186 binds ATP and competes with ATP-binding at Arg-118, thereby preventing adenylyltransferase activity. Activation dissociates ATP-binding from Glu-186, allowing ordered binding of the entire ATP moiety with the alpha-phosphate in an orientation that is productive for accepting an incoming target hydroxyl side chain. Adenylyltransferase that mediates the addition of adenosine 5'-monophosphate (AMP) to specific residues of target proteins. The polypeptide is Protein adenylyltransferase NmFic (Neisseria meningitidis serogroup B (strain ATCC BAA-335 / MC58)).